We begin with the raw amino-acid sequence, 457 residues long: Cation efflux system protein CusC (457 aa).

An N-terminal signal peptide occupies residues 1–17; the sequence is MSPCKLLPFCVALALTG. A lipid anchor (N-palmitoyl cysteine) is attached at Cys-18. The S-diacylglycerol cysteine moiety is linked to residue Cys-18.

This sequence belongs to the outer membrane factor (OMF) (TC 1.B.17) family. Homotrimer. Component of the cus efflux system composed of CusA, CusB, CusC and CusF.

The protein localises to the cell outer membrane. Functionally, forms pores that allow passive diffusion of cations across the outer membrane. Part of a cation efflux system that mediates resistance to copper and silver. In pathogenic strains it allows the bacteria to invade brain microvascular endothelial cells (BMEC) thus allowing it to cross the blood-brain barrier and cause neonatal meningitis. The chain is Cation efflux system protein CusC (cusC) from Escherichia coli (strain K12).